Consider the following 113-residue polypeptide: uncharacterized protein (113 aa).

The CHY-type; degenerate zinc finger occupies 16–96 (LVDNETRCFH…STVHCKYCNH (81 aa)). Zn(2+) is bound by residues C23, H25, C46, C49, C73, C76, C91, and C94.

It localises to the cytoplasm. The protein resides in the nucleus. This is an uncharacterized protein from Schizosaccharomyces pombe (strain 972 / ATCC 24843) (Fission yeast).